The chain runs to 129 residues: Iron-sulfur cluster assembly 1 homolog, mitochondrial (129 aa).

The transit peptide at 1-12 directs the protein to the mitochondrion; sequence MSASLVRATVRA. Fe cation-binding residues include C57, C121, and C123.

It belongs to the HesB/IscA family. Interacts with CRY2, but not with CRY1 (in vitro).

It localises to the mitochondrion. Its function is as follows. Involved in the maturation of mitochondrial 4Fe-4S proteins functioning late in the iron-sulfur cluster assembly pathway. Probably involved in the binding of an intermediate of Fe/S cluster assembly. This chain is Iron-sulfur cluster assembly 1 homolog, mitochondrial (Isca1), found in Mus musculus (Mouse).